The sequence spans 169 residues: MDLSRIPAQPKPGVINILIEIAGGSQNKYEFDKDLEAFALDRVLYSSVKYPYDYGFVPNTLADDGDPLDGMVIIDEPTFPGCVIAARPIGFLEMIDGGDRDEKILAVPDKDPRYAHVKSLNDVAPHRLDEIAEFFRSYKNLEKKVTQILGWQDVDQVKALVDQSIKAYK.

M1 carries the N-formylmethionine modification. Substrate-binding residues include K28, R42, and Y54. Mg(2+) contacts are provided by D64, D69, and D101. Y138 lines the substrate pocket.

This sequence belongs to the PPase family. As to quaternary structure, homohexamer. It depends on Mg(2+) as a cofactor.

It is found in the cytoplasm. It carries out the reaction diphosphate + H2O = 2 phosphate + H(+). In terms of biological role, catalyzes the hydrolysis of inorganic pyrophosphate (PPi) forming two phosphate ions. The protein is Inorganic pyrophosphatase of Nostoc sp. (strain PCC 7120 / SAG 25.82 / UTEX 2576).